Reading from the N-terminus, the 259-residue chain is Glutamate 5-kinase (259 aa).

Residue lysine 18 participates in ATP binding. Residues serine 54, aspartate 141, and asparagine 153 each contribute to the substrate site. 173–174 (SD) contributes to the ATP binding site.

It belongs to the glutamate 5-kinase family.

It localises to the cytoplasm. The catalysed reaction is L-glutamate + ATP = L-glutamyl 5-phosphate + ADP. It functions in the pathway amino-acid biosynthesis; L-proline biosynthesis; L-glutamate 5-semialdehyde from L-glutamate: step 1/2. Functionally, catalyzes the transfer of a phosphate group to glutamate to form L-glutamate 5-phosphate. This is Glutamate 5-kinase from Clavibacter michiganensis subsp. michiganensis (strain NCPPB 382).